The sequence spans 150 residues: 3-dehydroquinate dehydratase (150 aa).

Y26 serves as the catalytic Proton acceptor. 3 residues coordinate substrate: N77, H83, and D90. The active-site Proton donor is the H103. Substrate contacts are provided by residues 104-105 (LS) and R114.

This sequence belongs to the type-II 3-dehydroquinase family. Homododecamer.

It carries out the reaction 3-dehydroquinate = 3-dehydroshikimate + H2O. The protein operates within metabolic intermediate biosynthesis; chorismate biosynthesis; chorismate from D-erythrose 4-phosphate and phosphoenolpyruvate: step 3/7. Functionally, catalyzes a trans-dehydration via an enolate intermediate. This is 3-dehydroquinate dehydratase from Sodalis glossinidius (strain morsitans).